A 532-amino-acid polypeptide reads, in one-letter code: Ankyrin repeat-containing protein At2g01680 (532 aa).

ANK repeat units follow at residues 9–38 (LTHQ…GDEL), 58–89 (AGET…TVKI), 93–122 (SDMN…ELCR), 127–156 (SNTS…SCAM), 161–190 (NGKT…AIVG), 195–224 (KGQT…TILN), and 229–259 (KGNT…EVNA). 4 helical membrane passes run 354 to 374 (ITVV…NLPG), 396 to 416 (VFCL…VVQI), 436 to 456 (LMWA…FAVV), and 467 to 487 (ITLL…YFVF).

Its subcellular location is the membrane. This Arabidopsis thaliana (Mouse-ear cress) protein is Ankyrin repeat-containing protein At2g01680.